A 381-amino-acid polypeptide reads, in one-letter code: L-lactate dehydrogenase (381 aa).

The region spanning Met1 to Lys380 is the FMN hydroxy acid dehydrogenase domain. Tyr24 is a binding site for substrate. FMN contacts are provided by Ser106 and Gln127. Residue Tyr129 coordinates substrate. Thr155 is a binding site for FMN. Position 164 (Arg164) interacts with substrate. Residue Lys251 participates in FMN binding. His275 serves as the catalytic Proton acceptor. Arg278 serves as a coordination point for substrate. Asp306–Arg330 provides a ligand contact to FMN.

It belongs to the FMN-dependent alpha-hydroxy acid dehydrogenase family. The cofactor is FMN.

Its subcellular location is the cell inner membrane. It catalyses the reaction (S)-lactate + A = pyruvate + AH2. Catalyzes the conversion of L-lactate to pyruvate. Is coupled to the respiratory chain. The protein is L-lactate dehydrogenase of Haemophilus influenzae (strain PittEE).